The sequence spans 1401 residues: MEVLMAERADLVFHNKVIDGTAMKRLISRLIDHFGIAYTSHILDQVKTLGFQQATATSISLGIDDLLTTPSKRWLVQDAEQQSLILEKHHHYGNVHAVEKLRQSIEIWYATSEYLRQEMNLNFKMTDPSNPVHIMSYSGARGNASQVHQLVGMRGLMSDPQGQMIDLPIQSNLREGLSLTEYTISCYGARKGVVDTAVRTSDAGYLTRRLVEVVQHIVVRRTDCGSTRGISVSFRKGMTERIFIQTLIGRVLANDVYLGLRCIATRNQDIGIGLVNRFMTSRAQPIYIRTPFTCRSASWICRLCYGRSPTHGDLVELGEAVGIIAGQSIGEPGTQLTLRTFHTGGVFTGGTAEHVRAPSNGKIKFNEDLVHPTRTRHGHPAFLCYVDLYVTIESQDIIHSVNIPPKSFLLVQNDQYVESEQVIAEIRAGTSTFHFKERVRKHIYSDSEGEMHWSTGVYHAPEYTHGNVHFLPKTSHLWILSGGPCKSSLVPFSLHKDQDQMNVQSLSVQERSISDFSVNNNRVKHKLFGSDPLARKGRRISDYAAGSERVISNGDGDFIYPAILRENSYLLAKRRRNRFIIPFQYDPEWEKELTPHSSTSITVEIPANGILRRNSILAYFDDPRYRRSSSGITKYGIIEVDSIVKKEGLVEYRRPKESRPKYQMKVDRFFVIPEEVHILPGSSSIMVRNNSIIGVDTRITFNTRSQIGGLVRIEKKKKIELKIFSGGIHFPGETDKISRHIGILIPPGARKKMDKGSKGKNWEGNNWVYVQRITPIKKKYFVSVRPVVTYEIADGINLVTLFPGDMLQEKDNLRLQVVNYILYGDGKPIRGISHTSIQLVRTCLVLNWDQDKKGSIEKVQASSAEVRANDLIRYFIRIDLVKSPILYTGKRNDRSGSVIPDTGSYCANTNLFSSKVKIKSLSQHQGTVRTFLNRNKEGQSLIVFSSSNCSRINVSKYHNVTKESIKEKEDTPIPILNLLGPLGTVPKIHNFSPSYHSITHNEILLNKYLILDNKNPKQTFQLLKYYLVDENGRISNANPCSDIIFNLFGSCFLPHDYCEGTSTTRIISLGQFICENVCLSKHGTRIKSGQVIMVYLDSFIIRSAKPYLATRGATVHGDYGEIFYEGDTLVTFIYEKSRSGDITHGLPKVEQVLEVRSIDSISMNLEKRVEGWNEHITGILGIPWGFLIGAELTIAQSRVSLVNKIQKVYRSQGVQIHNKHIEIIVRQITSKVLVSEDGMSNVFSPGELIGLLRAERAGRALEEAICYRAVLLGITRASLNTQSFISEASFQETARVLAKAALRGRIDWLKGLKENVVLGGMIPVGTGFKRFVHRSREYNNIPLEIQKKNFFGGEMRDILFHHRELFCSCIPKPKSFHNTSEQPFYAMGSNPIVHKSGFIIS.

Zn(2+) contacts are provided by cysteine 224, cysteine 294, cysteine 301, and cysteine 304.

It belongs to the RNA polymerase beta' chain family. RpoC2 subfamily. In terms of assembly, in plastids the minimal PEP RNA polymerase catalytic core is composed of four subunits: alpha, beta, beta', and beta''. When a (nuclear-encoded) sigma factor is associated with the core the holoenzyme is formed, which can initiate transcription. The cofactor is Zn(2+).

It is found in the plastid. The protein localises to the chloroplast. The catalysed reaction is RNA(n) + a ribonucleoside 5'-triphosphate = RNA(n+1) + diphosphate. Its function is as follows. DNA-dependent RNA polymerase catalyzes the transcription of DNA into RNA using the four ribonucleoside triphosphates as substrates. The sequence is that of DNA-directed RNA polymerase subunit beta'' from Nymphaea alba (White water-lily).